Here is a 542-residue protein sequence, read N- to C-terminus: Organic anion transporter 3 (542 aa).

At 1–9 (MTFSEILDR) the chain is on the cytoplasmic side. Ser4 carries the phosphoserine modification. The helical transmembrane segment at 10–30 (VGSMGHFQFLHVAILGLPILN) threads the bilayer. Topologically, residues 31 to 123 (MANHNLLQIF…LVCNSNKLKE (93 aa)) are extracellular. Asn86 and Asn102 each carry an N-linked (GlcNAc...) asparagine glycan. The helical transmembrane segment at 124–144 (MAQSIFMAGILIGGLVLGDLS) threads the bilayer. The Cytoplasmic segment spans residues 145–154 (DRFGRRPILT). Residues 155 to 175 (CSYLLLAASGSGAAFSPTFPI) form a helical membrane-spanning segment. Residue Tyr176 is a topological domain, extracellular. The chain crosses the membrane as a helical span at residues 177–197 (MVFRFLCGFGISGITLSTVIL). At 198 to 212 (NVEWVPTRMRAIMST) the chain is on the cytoplasmic side. A helical membrane pass occupies residues 213–233 (ALGYCYTFGQFILPGLAYAIP). The Extracellular segment spans residues 234–236 (QWR). The helical transmembrane segment at 237 to 257 (WLQLTVSIPFFVFFLSSWWTP) threads the bilayer. Residues 258-327 (ESIRWLVLSG…FRIPMLRRMT (70 aa)) lie on the Cytoplasmic side of the membrane. The chain crosses the membrane as a helical span at residues 328–348 (FCLSLAWFATGFAYYSLAMGV). Residues 349-354 (EEFGVN) lie on the Extracellular side of the membrane. A helical transmembrane segment spans residues 355–375 (LYILQIIFGGVDVPAKFITIL). Residues 376-386 (SLSYLGRHTTQ) lie on the Cytoplasmic side of the membrane. Residues 387–407 (AAALLLAGGAILALTFVPLDL) traverse the membrane as a helical segment. At 408 to 411 (QTVR) the chain is on the extracellular side. A helical transmembrane segment spans residues 412 to 432 (TVLAVFGKGCLSSSFSCLFLY). Residues 433–471 (TSELYPTVIRQTGMGVSNLWTRVGSMVSPLVKITGEVQP) are Cytoplasmic-facing. A helical transmembrane segment spans residues 472–492 (FIPNIIYGITALLGGSAALFL). The Extracellular portion of the chain corresponds to 493 to 542 (PETLNQPLPETIEDLENWSLRAKKPKQEPEVEKASQRIPLQPHGPGLGSS). The interval 515–542 (KKPKQEPEVEKASQRIPLQPHGPGLGSS) is disordered. Basic and acidic residues predominate over residues 517 to 527 (PKQEPEVEKAS).

This sequence belongs to the major facilitator (TC 2.A.1) superfamily. Organic cation transporter (TC 2.A.1.19) family. As to expression, strongly expressed in kidney. Weaker expression in brain and skeletal muscle. Expressed in adrenal glands.

It localises to the basolateral cell membrane. It catalyses the reaction estrone 3-sulfate(out) + glutarate(in) = estrone 3-sulfate(in) + glutarate(out). The catalysed reaction is estrone 3-sulfate(in) + 2-oxoglutarate(out) = estrone 3-sulfate(out) + 2-oxoglutarate(in). It carries out the reaction glutarate(in) + 2-oxoglutarate(out) = glutarate(out) + 2-oxoglutarate(in). The enzyme catalyses urate(in) + 2-oxoglutarate(out) = urate(out) + 2-oxoglutarate(in). It catalyses the reaction taurocholate(out) + glutarate(in) = taurocholate(in) + glutarate(out). The catalysed reaction is dehydroepiandrosterone 3-sulfate(out) + glutarate(in) = dehydroepiandrosterone 3-sulfate(in) + glutarate(out). It carries out the reaction prostaglandin F2alpha(out) + glutarate(in) = prostaglandin F2alpha(in) + glutarate(out). The enzyme catalyses prostaglandin F2alpha(out) + 2-oxoglutarate(in) = prostaglandin F2alpha(in) + 2-oxoglutarate(out). It catalyses the reaction (R)-carnitine(out) + 2-oxoglutarate(in) = (R)-carnitine(in) + 2-oxoglutarate(out). The catalysed reaction is glutarate(in) + (R)-carnitine(out) = glutarate(out) + (R)-carnitine(in). It carries out the reaction prostaglandin E2(out) + 2-oxoglutarate(in) = prostaglandin E2(in) + 2-oxoglutarate(out). The enzyme catalyses prostaglandin E2(out) + glutarate(in) = prostaglandin E2(in) + glutarate(out). It catalyses the reaction urate(in) + glutarate(out) = urate(out) + glutarate(in). The catalysed reaction is taurocholate(out) + 2-oxoglutarate(in) = taurocholate(in) + 2-oxoglutarate(out). It carries out the reaction dehydroepiandrosterone 3-sulfate(out) + 2-oxoglutarate(in) = dehydroepiandrosterone 3-sulfate(in) + 2-oxoglutarate(out). The enzyme catalyses kynurenate(out) + a dicarboxylate(in) = kynurenate(in) + a dicarboxylate(out). It catalyses the reaction (indol-3-yl)acetate(out) + a dicarboxylate(in) = (indol-3-yl)acetate(in) + a dicarboxylate(out). The catalysed reaction is indoxyl sulfate(out) + a dicarboxylate(in) = indoxyl sulfate(in) + a dicarboxylate(out). It carries out the reaction N-benzoylglycine(out) + a dicarboxylate(in) = N-benzoylglycine(in) + a dicarboxylate(out). The enzyme catalyses 3-carboxy-4-methyl-5-propyl-2-furanpropanoate(out) + a dicarboxylate(in) = 3-carboxy-4-methyl-5-propyl-2-furanpropanoate(in) + a dicarboxylate(out). It catalyses the reaction (6R)-L-erythro-5,6,7,8-tetrahydrobiopterin(out) + a dicarboxylate(in) = (6R)-L-erythro-5,6,7,8-tetrahydrobiopterin(in) + a dicarboxylate(out). The catalysed reaction is L-erythro-7,8-dihydrobiopterin(out) + a dicarboxylate(in) = L-erythro-7,8-dihydrobiopterin(in) + a dicarboxylate(out). It carries out the reaction L-sepiapterin(out) + a dicarboxylate(in) = L-sepiapterin(in) + a dicarboxylate(out). In terms of biological role, functions as an organic anion/dicarboxylate exchanger that couples organic anion uptake indirectly to the sodium gradient. Transports organic anions such as estrone 3-sulfate (E1S) and urate in exchange for dicarboxylates such as glutarate or ketoglutarate (2-oxoglutarate). Plays an important role in the excretion of endogenous and exogenous organic anions, especially from the kidney and the brain. E1S transport is pH- and chloride-dependent and may also involve E1S/cGMP exchange. Responsible for the transport of prostaglandin E2 (PGE2) and prostaglandin F2(alpha) (PGF2(alpha)) in the basolateral side of the renal tubule. Involved in the transport of neuroactive tryptophan metabolites kynurenate and xanthurenate. Functions as a biopterin transporters involved in the uptake and the secretion of coenzymes tetrahydrobiopterin (BH4), dihydrobiopterin (BH2) and sepiapterin to urine, thereby determining baseline levels of blood biopterins. May be involved in the basolateral transport of steviol, a metabolite of the popular sugar substitute stevioside. May participate in the detoxification/ renal excretion of drugs and xenobiotics, such as the histamine H(2)-receptor antagonists fexofenadine and cimetidine, the antibiotic benzylpenicillin (PCG), the anionic herbicide 2,4-dichloro-phenoxyacetate (2,4-D), the diagnostic agent p-aminohippurate (PAH), the antiviral acyclovir (ACV), and the mycotoxin ochratoxin (OTA), by transporting these exogenous organic anions across the cell membrane in exchange for dicarboxylates such as 2-oxoglutarate. Contributes to the renal uptake of potent uremic toxins (indoxyl sulfate (IS), indole acetate (IA), hippurate/N-benzoylglycine (HA) and 3-carboxy-4-methyl-5-propyl-2-furanpropionate (CMPF)), pravastatin, PCG, E1S and dehydroepiandrosterone sulfate (DHEAS), and is partly involved in the renal uptake of temocaprilat (an angiotensin-converting enzyme (ACE) inhibitor). May contribute to the release of cortisol in the adrenals. Involved in one of the detoxification systems on the choroid plexus (CP), removes substrates such as E1S or taurocholate (TC), PCG, 2,4-D and PAH, from the cerebrospinal fluid (CSF) to the blood for eventual excretion in urine and bile. Also contributes to the uptake of several other organic compounds such as the prostanoids prostaglandin E(2) and prostaglandin F(2-alpha), L-carnitine, and the therapeutic drugs allopurinol, 6-mercaptopurine (6-MP) and 5-fluorouracil (5-FU). Mediates the transport of PAH, PCG, and the statins pravastatin and pitavastatin, from the cerebrum into the blood circulation across the blood-brain barrier (BBB). In summary, plays a role in the efflux of drugs and xenobiotics, helping reduce their undesired toxicological effects on the body. This Homo sapiens (Human) protein is Organic anion transporter 3.